A 583-amino-acid chain; its full sequence is Pescadillo (583 aa).

Residues E275–E329 are a coiled coil. In terms of domain architecture, BRCT spans K323–L416. 2 disordered regions span residues R448–A526 and A558–C583. Residues E455–N489 are compositionally biased toward acidic residues. The span at A512–A526 shows a compositional bias: basic and acidic residues.

The protein belongs to the pescadillo family. As to quaternary structure, component of the PeBoW complex, composed of bop1, pes1 and wdr12. The complex is held together by bop1, which interacts with pes1 via its N-terminal domain and with wdr12 via a high-affinity interaction between the seven-bladed beta-propeller domains of the 2 proteins. The PeBoW complex associates with the 66S pre-ribosome.

It is found in the nucleus. It localises to the nucleolus. The protein localises to the nucleoplasm. Its function is as follows. Component of the PeBoW complex, which is required for maturation of 28S and 5.8S ribosomal RNAs and formation of the 60S ribosome. The sequence is that of Pescadillo (pes) from Danio rerio (Zebrafish).